We begin with the raw amino-acid sequence, 300 residues long: Protein YIF1B-B (300 aa).

Positions 1 to 46 (MNQESSFRAPPKRRVRGSNPNISNPHQLFDDTSGGPVPHGGDFPNH) are disordered. The Cytoplasmic segment spans residues 1–142 (MNQESSFRAP…APRFDINAPD (142 aa)). A helical membrane pass occupies residues 143–163 (LYIPVMAFITYILVAGLALGT). Topologically, residues 164-178 (QSRFSPEILGMQASS) are extracellular. A helical transmembrane segment spans residues 179 to 199 (ALAWLIVEVLAILLSLYLVTV). Over 200 to 205 (NTDLTT) the chain is Cytoplasmic. A helical membrane pass occupies residues 206–226 (VDLVAFSGYKYVGMISGVIAG). A topological domain (extracellular) is located at residue L227. The chain crosses the membrane as a helical span at residues 228 to 248 (LFGNTGYYVVLAWCCISIVFF). Residues 249–278 (MIRTLRLKILSEAAAEGVLVRGARNQLRMY) are Cytoplasmic-facing. The helical transmembrane segment at 279 to 299 (LTMAIAAVQPIFMYWLTYHLV) threads the bilayer. R300 is a topological domain (extracellular).

It belongs to the YIF1 family.

Its subcellular location is the endoplasmic reticulum membrane. The protein resides in the golgi apparatus membrane. It is found in the endoplasmic reticulum-Golgi intermediate compartment membrane. In terms of biological role, functions in endoplasmic reticulum to Golgi vesicle-mediated transport and regulates the proper organization of the endoplasmic reticulum and the Golgi. Plays a key role in targeting to neuronal dendrites receptors such as HTR1A. Plays also a role in primary cilium and sperm flagellum assembly probably through protein transport to these compartments. This is Protein YIF1B-B (yif1b-b) from Xenopus laevis (African clawed frog).